Reading from the N-terminus, the 218-residue chain is Elongation factor Ts (218 aa).

The segment at 82–85 (TDFV) is involved in Mg(2+) ion dislocation from EF-Tu.

This sequence belongs to the EF-Ts family.

It is found in the cytoplasm. Functionally, associates with the EF-Tu.GDP complex and induces the exchange of GDP to GTP. It remains bound to the aminoacyl-tRNA.EF-Tu.GTP complex up to the GTP hydrolysis stage on the ribosome. This chain is Elongation factor Ts, found in Prochlorococcus marinus (strain MIT 9312).